Consider the following 448-residue polypeptide: Binary larvicide subunit BinB (448 aa).

Residues 1–198 (MCDSKDNSGV…TAFVNSSFYA (198 aa)) form a beta-trefoil domain region. A disulfide bridge links Cys67 with Cys161. Positions 199–448 (AAIPQLPQTS…NEELIPKINQ (250 aa)) are probable pore-forming domain.

The protein belongs to the toxin_10 family. Forms a heterodimer with BinA. Upon toxin crystal solubilization with NaOH at pH 12, only the 63-kDa (binB) and 43-kDa (binA) proteins were detected. Interacts with mosquito protein Cpm1 which acts as its host receptor. Post-translationally, processed by proteases extracted from C.pipiens larval gut; unlike its partner BinA, it does not form a stable digestion product.

Its subcellular location is the spore. It localises to the perispore. Its function is as follows. Component of a binary toxin active against Culex and some Aedes mosquito larvae. This subunit alone has no toxic larvicidal activity. This subunit is responsible for localized binding to specific regions of the host larval gut. Binary toxin internalization into host gut cells requires both proteins. This chain is Binary larvicide subunit BinB (binB), found in Lysinibacillus sphaericus (Bacillus sphaericus).